The following is a 38-amino-acid chain: Non-specific lipid-transfer protein P2 (38 aa).

The protein belongs to the plant LTP family.

Its subcellular location is the secreted. In terms of biological role, plant non-specific lipid-transfer proteins transfer phospholipids as well as galactolipids across membranes. May play a role in wax or cutin deposition in the cell walls of expanding epidermal cells and certain secretory tissues. This Vitis sp. (Grape) protein is Non-specific lipid-transfer protein P2.